Consider the following 388-residue polypeptide: Cystathionine gamma-synthase (388 aa).

Residues 1-24 are disordered; sequence MSEDRTGHQGISGPATRAIHAGYR. An N6-(pyridoxal phosphate)lysine modification is found at K208.

Belongs to the trans-sulfuration enzymes family. Homotetramer. It depends on pyridoxal 5'-phosphate as a cofactor.

It is found in the cytoplasm. The catalysed reaction is O-succinyl-L-homoserine + L-cysteine = L,L-cystathionine + succinate + H(+). Catalyzes the formation of L-cystathionine from O-succinyl-L-homoserine (OSHS) and L-cysteine, via a gamma-replacement reaction. In the absence of thiol, catalyzes gamma-elimination to form 2-oxobutanoate, succinate and ammonia. The polypeptide is Cystathionine gamma-synthase (metB) (Mycobacterium bovis (strain ATCC BAA-935 / AF2122/97)).